The chain runs to 710 residues: Polyribonucleotide nucleotidyltransferase (710 aa).

The Mg(2+) site is built by Asp489 and Asp495. Positions 556 to 615 (PKIDTIKIDVDKIKVVIGKGGETIDKIIAETGVKIDIDDEGNVSIYSSDQAAINRTKEII) constitute a KH domain. Positions 625-693 (GEVYHAKVVR…EKGRVDASMK (69 aa)) constitute an S1 motif domain. A disordered region spans residues 691–710 (SMKALIPRPPKPEKKEEKHD). Over residues 700 to 710 (PKPEKKEEKHD) the composition is skewed to basic and acidic residues.

The cofactor is Mg(2+).

The protein localises to the cytoplasm. The catalysed reaction is RNA(n+1) + phosphate = RNA(n) + a ribonucleoside 5'-diphosphate. Its function is as follows. Involved in mRNA degradation. Catalyzes the phosphorolysis of single-stranded polyribonucleotides processively in the 3'- to 5'-direction. This chain is Polyribonucleotide nucleotidyltransferase, found in Streptococcus pyogenes serotype M6 (strain ATCC BAA-946 / MGAS10394).